We begin with the raw amino-acid sequence, 89 residues long: Gibberellin-regulated protein 10 (89 aa).

The N-terminal stretch at 1-25 (MKFPAVKVLIISLLITSSLFILSTA) is a signal peptide.

This sequence belongs to the GASA family. Post-translationally, six disulfide bonds may be present. Expressed in vasculature of rosette leaves and roots, cotyledon and root tips and developing seeds.

It localises to the secreted. Its function is as follows. Gibberellin-regulated protein that may function in hormonal controlled steps of development such as seed germination, flowering and seed maturation. The sequence is that of Gibberellin-regulated protein 10 (GASA10) from Arabidopsis thaliana (Mouse-ear cress).